A 117-amino-acid chain; its full sequence is Ribosome-binding factor A (117 aa).

This sequence belongs to the RbfA family. In terms of assembly, monomer. Binds 30S ribosomal subunits, but not 50S ribosomal subunits or 70S ribosomes.

It localises to the cytoplasm. Functionally, one of several proteins that assist in the late maturation steps of the functional core of the 30S ribosomal subunit. Associates with free 30S ribosomal subunits (but not with 30S subunits that are part of 70S ribosomes or polysomes). Required for efficient processing of 16S rRNA. May interact with the 5'-terminal helix region of 16S rRNA. The sequence is that of Ribosome-binding factor A from Leptospira borgpetersenii serovar Hardjo-bovis (strain JB197).